The primary structure comprises 596 residues: UvrABC system protein C (596 aa).

Residues 14–91 (DQPGCYLMKD…IKLHDPKYNV (78 aa)) form the GIY-YIG domain. Positions 196–231 (EAVKKELEVKMLAAAENLEFERAKEFRDQIAHIDTV) constitute a UVR domain.

The protein belongs to the UvrC family. As to quaternary structure, interacts with UvrB in an incision complex.

It localises to the cytoplasm. Functionally, the UvrABC repair system catalyzes the recognition and processing of DNA lesions. UvrC both incises the 5' and 3' sides of the lesion. The N-terminal half is responsible for the 3' incision and the C-terminal half is responsible for the 5' incision. The polypeptide is UvrABC system protein C (Lysinibacillus sphaericus (strain C3-41)).